We begin with the raw amino-acid sequence, 488 residues long: Protein nucleotidyltransferase YdiU (488 aa).

ATP is bound by residues Gly91, Gly93, Arg94, Lys114, Asp126, Gly127, Arg177, and Arg184. Asp253 serves as the catalytic Proton acceptor. Residues Asn254 and Asp263 each coordinate Mg(2+). Asp263 contributes to the ATP binding site.

This sequence belongs to the SELO family. It depends on Mg(2+) as a cofactor. The cofactor is Mn(2+).

It catalyses the reaction L-seryl-[protein] + ATP = 3-O-(5'-adenylyl)-L-seryl-[protein] + diphosphate. The catalysed reaction is L-threonyl-[protein] + ATP = 3-O-(5'-adenylyl)-L-threonyl-[protein] + diphosphate. It carries out the reaction L-tyrosyl-[protein] + ATP = O-(5'-adenylyl)-L-tyrosyl-[protein] + diphosphate. The enzyme catalyses L-histidyl-[protein] + UTP = N(tele)-(5'-uridylyl)-L-histidyl-[protein] + diphosphate. It catalyses the reaction L-seryl-[protein] + UTP = O-(5'-uridylyl)-L-seryl-[protein] + diphosphate. The catalysed reaction is L-tyrosyl-[protein] + UTP = O-(5'-uridylyl)-L-tyrosyl-[protein] + diphosphate. Nucleotidyltransferase involved in the post-translational modification of proteins. It can catalyze the addition of adenosine monophosphate (AMP) or uridine monophosphate (UMP) to a protein, resulting in modifications known as AMPylation and UMPylation. In Bacillus cereus (strain ATCC 14579 / DSM 31 / CCUG 7414 / JCM 2152 / NBRC 15305 / NCIMB 9373 / NCTC 2599 / NRRL B-3711), this protein is Protein nucleotidyltransferase YdiU.